The sequence spans 205 residues: MSKKRGLSVEEKRTRMMEIFFETKDVFQLKDLEKIAPKEKGITSMSVKEILQSLVDDGMVDSERIGTSNYFWAFPSKALHARKRKLETLEAQFTEVKQKKESLQQCVDKAKVGRQDTEERSKLVEELASLRHRKEELCADLEKYKECDPDVVEEIRQSNKVAKDAVNRWTDNIFAVKSWAKKKFGFEERQIDKNFGIPEDFDYID.

The stretch at 79–147 (LHARKRKLET…CADLEKYKEC (69 aa)) forms a coiled coil.

This sequence belongs to the MND1 family.

It is found in the nucleus. Functionally, required for proper homologous chromosome pairing and efficient cross-over and intragenic recombination during meiosis. Stimulates both dmc1- and rad51-mediated homologous strand assimilation, which is required for the resolution of meiotic double-strand breaks. This Xenopus laevis (African clawed frog) protein is Meiotic nuclear division protein 1 homolog.